The following is a 34-amino-acid chain: Mu-theraphotoxin-Pspp1 (34 aa).

3 disulfides stabilise this stretch: cysteine 2–cysteine 17, cysteine 9–cysteine 22, and cysteine 16–cysteine 29. Phenylalanine 34 carries the post-translational modification Phenylalanine amide.

Belongs to the neurotoxin 10 (Hwtx-1) family. As to expression, expressed by the venom gland.

The protein resides in the secreted. Its function is as follows. Voltage-gated sodium channel inhibitor. It is unclear if it selectively inhibits Nav1.7/SCN9A or shows similar potency on all sodium channels tested. According to Escoubas et al., 2006 and Nicolas et al., 2019, it is selective over Nav1.7/SCN9A (90% inhibition at 1 uM), versus Nav1.4 and Nav1.6 (35% inhibition), and shows a small inhibition on all other sodium channels (except Nav1.8/SCN10A). According to Goncalves et al., 2019, it shows a similar inhibition on almost all sodium channels tested (Nav1.1/SCN1A (IC(50)=280.3 nM), Nav1.2/SCN2A (IC(50)=73.7 nM), Nav1.3/SCN3A (IC(50)=201.5 nM), Nav1.4/SCN4A (IC(50)&gt;2100 nM), Nav1.5/SCN5A (IC(50)=710.6 nM), Nav1.6/SCN8A (IC(50)=491.2 nM), and Nav1.7/SCN9A (IC(50)=254.3-260 nM)), except Nav1.8/SCN10A. The voltage-dependence of steady-state Nav1.7/SCN9A channel activation and inactivation are not affected, suggesting that is does not act as a gating-modifier toxin but rather blocks or impedes ion flux through the channel pore. The toxin effect is partial and poorly reversible. In addition to its inhibition to sodium channels, it also shows a small inhibition on rat Kv3.4/KCNC4 potassium channels (20% inhibition at 1 uM). In vivo, when tested on pain models, it shows analgesic activity. The protein is Mu-theraphotoxin-Pspp1 of Phlogiellus sp. (Tarantula).